We begin with the raw amino-acid sequence, 455 residues long: Bifunctional protein GlmU (455 aa).

Positions 1-226 (MGLSVVILAA…EFEILGVNDR (226 aa)) are pyrophosphorylase. Residues 8–11 (LAAG), Lys22, Gln73, 78–79 (GT), 99–101 (YGD), Gly136, Glu151, Asn166, and Asn224 each bind UDP-N-acetyl-alpha-D-glucosamine. Asp101 contacts Mg(2+). Residue Asn224 participates in Mg(2+) binding. The tract at residues 227–247 (TQLASLERVWQRNVAEKIMAK) is linker. The N-acetyltransferase stretch occupies residues 248-455 (GVSIADPNRF…WQRSVKKTDK (208 aa)). 2 residues coordinate UDP-N-acetyl-alpha-D-glucosamine: Arg330 and Lys348. His360 serves as the catalytic Proton acceptor. Tyr363 and Asn374 together coordinate UDP-N-acetyl-alpha-D-glucosamine. Acetyl-CoA is bound by residues Ala377, 383-384 (NY), Ser402, Ala420, and Arg437.

It in the N-terminal section; belongs to the N-acetylglucosamine-1-phosphate uridyltransferase family. The protein in the C-terminal section; belongs to the transferase hexapeptide repeat family. As to quaternary structure, homotrimer. Mg(2+) is required as a cofactor.

It localises to the cytoplasm. The catalysed reaction is alpha-D-glucosamine 1-phosphate + acetyl-CoA = N-acetyl-alpha-D-glucosamine 1-phosphate + CoA + H(+). It carries out the reaction N-acetyl-alpha-D-glucosamine 1-phosphate + UTP + H(+) = UDP-N-acetyl-alpha-D-glucosamine + diphosphate. The protein operates within nucleotide-sugar biosynthesis; UDP-N-acetyl-alpha-D-glucosamine biosynthesis; N-acetyl-alpha-D-glucosamine 1-phosphate from alpha-D-glucosamine 6-phosphate (route II): step 2/2. Its pathway is nucleotide-sugar biosynthesis; UDP-N-acetyl-alpha-D-glucosamine biosynthesis; UDP-N-acetyl-alpha-D-glucosamine from N-acetyl-alpha-D-glucosamine 1-phosphate: step 1/1. It functions in the pathway bacterial outer membrane biogenesis; LPS lipid A biosynthesis. Functionally, catalyzes the last two sequential reactions in the de novo biosynthetic pathway for UDP-N-acetylglucosamine (UDP-GlcNAc). The C-terminal domain catalyzes the transfer of acetyl group from acetyl coenzyme A to glucosamine-1-phosphate (GlcN-1-P) to produce N-acetylglucosamine-1-phosphate (GlcNAc-1-P), which is converted into UDP-GlcNAc by the transfer of uridine 5-monophosphate (from uridine 5-triphosphate), a reaction catalyzed by the N-terminal domain. This is Bifunctional protein GlmU from Francisella tularensis subsp. tularensis (strain SCHU S4 / Schu 4).